Consider the following 419-residue polypeptide: S-adenosylmethionine synthase (419 aa).

An ATP-binding site is contributed by H15. Residue D17 participates in Mg(2+) binding. Residue E43 participates in K(+) binding. E56 and Q100 together coordinate L-methionine. A flexible loop region spans residues 100 to 110 (QSPDIAQGVDE). ATP-binding positions include 171–173 (DGK), 248–249 (KF), D257, 263–264 (RK), A280, and K284. D257 is an L-methionine binding site. Residue K288 participates in L-methionine binding.

It belongs to the AdoMet synthase family. In terms of assembly, homotetramer; dimer of dimers. Mg(2+) serves as cofactor. Requires K(+) as cofactor.

The protein localises to the cytoplasm. The enzyme catalyses L-methionine + ATP + H2O = S-adenosyl-L-methionine + phosphate + diphosphate. It participates in amino-acid biosynthesis; S-adenosyl-L-methionine biosynthesis; S-adenosyl-L-methionine from L-methionine: step 1/1. Catalyzes the formation of S-adenosylmethionine (AdoMet) from methionine and ATP. The overall synthetic reaction is composed of two sequential steps, AdoMet formation and the subsequent tripolyphosphate hydrolysis which occurs prior to release of AdoMet from the enzyme. This chain is S-adenosylmethionine synthase, found in Synechococcus sp. (strain WH7803).